Consider the following 968-residue polypeptide: Glycine dehydrogenase (decarboxylating) (968 aa).

The residue at position 717 (lysine 717) is an N6-(pyridoxal phosphate)lysine.

The protein belongs to the GcvP family. In terms of assembly, the glycine cleavage system is composed of four proteins: P, T, L and H. Pyridoxal 5'-phosphate is required as a cofactor.

The catalysed reaction is N(6)-[(R)-lipoyl]-L-lysyl-[glycine-cleavage complex H protein] + glycine + H(+) = N(6)-[(R)-S(8)-aminomethyldihydrolipoyl]-L-lysyl-[glycine-cleavage complex H protein] + CO2. In terms of biological role, the glycine cleavage system catalyzes the degradation of glycine. The P protein binds the alpha-amino group of glycine through its pyridoxal phosphate cofactor; CO(2) is released and the remaining methylamine moiety is then transferred to the lipoamide cofactor of the H protein. The chain is Glycine dehydrogenase (decarboxylating) from Tropheryma whipplei (strain TW08/27) (Whipple's bacillus).